Here is a 69-residue protein sequence, read N- to C-terminus: Guanine nucleotide-binding protein G(I)/G(S)/G(O) subunit gamma-T2 (69 aa).

Residue Cys66 is modified to Cysteine methyl ester. Cys66 carries the S-farnesyl cysteine lipid modification. Residues 67-69 constitute a propeptide, removed in mature form; the sequence is LIS.

This sequence belongs to the G protein gamma family. In terms of assembly, g proteins are composed of 3 units, alpha, beta and gamma. In terms of tissue distribution, retinal cones.

The protein resides in the cell membrane. Its function is as follows. Guanine nucleotide-binding proteins (G proteins) are involved as a modulator or transducer in various transmembrane signaling systems. The beta and gamma chains are required for the GTPase activity, for replacement of GDP by GTP, and for G protein-effector interaction. This is Guanine nucleotide-binding protein G(I)/G(S)/G(O) subunit gamma-T2 (GNGT2) from Homo sapiens (Human).